Here is a 64-residue protein sequence, read N- to C-terminus: Probable tautomerase lp_1712 (64 aa).

The active-site Proton acceptor; via imino nitrogen is the Pro-2.

Belongs to the 4-oxalocrotonate tautomerase family.

This chain is Probable tautomerase lp_1712, found in Lactiplantibacillus plantarum (strain ATCC BAA-793 / NCIMB 8826 / WCFS1) (Lactobacillus plantarum).